The following is a 453-amino-acid chain: DDB1- and CUL4-associated factor 12 (453 aa).

The segment covering 1 to 12 has biased composition (basic residues); the sequence is MARKAVSRKRKA. Positions 1–34 are disordered; it reads MARKAVSRKRKASASPGAGSDAQGPQFGWDHSLH. Positions 1 to 38 are required for nuclear location and interaction with MOV10; it reads MARKAVSRKRKASASPGAGSDAQGPQFGWDHSLHKRKR. At Ser15 the chain carries Phosphoserine. WD repeat units follow at residues 138 to 178, 182 to 220, 250 to 289, and 338 to 375; these read QQGC…PVCV, GHKD…LTKS, PDNC…SKLL, and ERGS…FLEE.

This sequence belongs to the WD repeat DCAF12 family. Component of the DCX(DCAF12) E3 ubiquitin ligase complex, at least composed of CUL4 (CUL4A or CUL4B), DDB1, DCAF12 and RBX1.

Its subcellular location is the cytoplasm. The protein localises to the cytoskeleton. The protein resides in the microtubule organizing center. It localises to the centrosome. It is found in the nucleus. Its pathway is protein modification; protein ubiquitination. Its function is as follows. Substrate-recognition component of a DCX (DDB1-CUL4-X-box) E3 ubiquitin-protein ligase complex of the DesCEND (destruction via C-end degrons) pathway, which recognizes a C-degron located at the extreme C terminus of target proteins, leading to their ubiquitination and degradation. The C-degron recognized by the DesCEND pathway is usually a motif of less than ten residues and can be present in full-length proteins, truncated proteins or proteolytically cleaved forms. The DCX(DCAF12) complex specifically recognizes proteins with a diglutamate (Glu-Glu) at the C-terminus, such as MAGEA3, MAGEA6 and CCT5, leading to their ubiquitination and degradation. Ubiquitination of MAGEA3, MAGEA6 by DCX(DCAF12) complex is required for starvation-induced autophagy. Also directly recognizes the C-terminal glutamate-leucine (Glu-Leu) degron as an alternative degron in proteins such as MOV10, leading to their ubiquitination and degradation. Controls the protein level of MOV10 during spermatogenesis and in T cells, especially after their activation. The chain is DDB1- and CUL4-associated factor 12 from Mus musculus (Mouse).